Here is a 244-residue protein sequence, read N- to C-terminus: 1-(5-phosphoribosyl)-5-[(5-phosphoribosylamino)methylideneamino] imidazole-4-carboxamide isomerase (244 aa).

The Proton acceptor role is filled by Asp-10. Asp-132 functions as the Proton donor in the catalytic mechanism.

It belongs to the HisA/HisF family.

The protein resides in the cytoplasm. The enzyme catalyses 1-(5-phospho-beta-D-ribosyl)-5-[(5-phospho-beta-D-ribosylamino)methylideneamino]imidazole-4-carboxamide = 5-[(5-phospho-1-deoxy-D-ribulos-1-ylimino)methylamino]-1-(5-phospho-beta-D-ribosyl)imidazole-4-carboxamide. Its pathway is amino-acid biosynthesis; L-histidine biosynthesis; L-histidine from 5-phospho-alpha-D-ribose 1-diphosphate: step 4/9. This Stenotrophomonas maltophilia (strain K279a) protein is 1-(5-phosphoribosyl)-5-[(5-phosphoribosylamino)methylideneamino] imidazole-4-carboxamide isomerase.